The chain runs to 463 residues: L-2-hydroxyglutarate dehydrogenase, mitochondrial (463 aa).

Residues 1 to 51 constitute a mitochondrion transit peptide; the sequence is MVPALRYLVGACGRARGLFAGGSPGACGFASGRPRPLCGGSRSASTSSFDI. N6-acetyllysine occurs at positions 104, 155, and 173.

Belongs to the L2HGDH family. FAD is required as a cofactor. Widely expressed. Highly expressed in brain, testis and muscle. Expressed to a lower extent in lymphocytes, fibroblasts, keratinocytes, placenta, bladder, small intestine, liver and bone marrow.

The protein resides in the mitochondrion. It catalyses the reaction (S)-2-hydroxyglutarate + A = 2-oxoglutarate + AH2. This is L-2-hydroxyglutarate dehydrogenase, mitochondrial (L2HGDH) from Homo sapiens (Human).